Consider the following 197-residue polypeptide: Recombination protein RecR (197 aa).

Residues 57-72 (CSICFAITEDDPCAIC) form a C4-type zinc finger. The Toprim domain occupies 79 to 174 (GTICVVENSQ…RISRLAHGIP (96 aa)).

Belongs to the RecR family.

Functionally, may play a role in DNA repair. It seems to be involved in an RecBC-independent recombinational process of DNA repair. It may act with RecF and RecO. In Pelobacter propionicus (strain DSM 2379 / NBRC 103807 / OttBd1), this protein is Recombination protein RecR.